The chain runs to 90 residues: MRRLLMKGIRFYQRAFSAFSPAHCRYYPTCSNYTLEAINRFGAVKGVLMGVARILRCQPLVKGGFDPVPAHFSLRRNPQYKEEDHRGKKR.

The disordered stretch occupies residues 68–90 (VPAHFSLRRNPQYKEEDHRGKKR). Residues 79–90 (QYKEEDHRGKKR) are compositionally biased toward basic and acidic residues.

This sequence belongs to the UPF0161 family.

It is found in the cell membrane. In terms of biological role, could be involved in insertion of integral membrane proteins into the membrane. The polypeptide is Putative membrane protein insertion efficiency factor (Lactiplantibacillus plantarum (strain ATCC BAA-793 / NCIMB 8826 / WCFS1) (Lactobacillus plantarum)).